Reading from the N-terminus, the 183-residue chain is Inosine/xanthosine triphosphatase (183 aa).

It belongs to the YjjX NTPase family. In terms of assembly, homodimer. The cofactor is Mg(2+). Mn(2+) serves as cofactor.

The enzyme catalyses XTP + H2O = XDP + phosphate + H(+). It carries out the reaction ITP + H2O = IDP + phosphate + H(+). Functionally, phosphatase that hydrolyzes non-canonical purine nucleotides such as XTP and ITP to their respective diphosphate derivatives. Probably excludes non-canonical purines from DNA/RNA precursor pool, thus preventing their incorporation into DNA/RNA and avoiding chromosomal lesions. This chain is Inosine/xanthosine triphosphatase, found in Vibrio cholerae serotype O1 (strain ATCC 39315 / El Tor Inaba N16961).